Reading from the N-terminus, the 484-residue chain is Sperm-associated antigen 8 (484 aa).

A compositionally biased stretch (basic and acidic residues) spans 1-11 (METSESTDRSQ). 3 disordered regions span residues 1–32 (METS…DPFS), 123–221 (DLSS…SAPV), and 324–348 (LQPQ…SHCQ). 2 stretches are compositionally biased toward low complexity: residues 20-32 (SSDG…DPFS) and 125-160 (SSSR…SSSS). Residues 161–195 (GPGGSPGGSGRGPGHGPGPGGGSGQGPGGGSGQGT) show a composition bias toward gly residues. Residues 324-339 (LQPQSPTSSCTTQKDS) are compositionally biased toward polar residues. 2 mn regions span residues 332 to 345 (SCTT…PPKS) and 384 to 398 (ESVT…LVQA). Residues 455–484 (PLPFEPESYSQHGEISSLACQGGGQGGGGG) form a disordered region. Positions 475 to 484 (QGGGQGGGGG) are enriched in gly residues.

It belongs to the SPAG8 family. Microtubule inner protein component of sperm flagellar doublet microtubules. Interacts with FHL5 (via second LIM domain). Interacts with RANBP9. Expressed in trachea multiciliated cells.

It is found in the cytoplasm. Its subcellular location is the nucleus. It localises to the cytoplasmic vesicle. The protein resides in the secretory vesicle. The protein localises to the acrosome. It is found in the cytoskeleton. Its subcellular location is the microtubule organizing center. It localises to the spindle. The protein resides in the cilium axoneme. The protein localises to the flagellum axoneme. Functionally, microtubule inner protein (MIP) part of the dynein-decorated doublet microtubules (DMTs) in cilia axoneme, which is required for motile cilia beating. Plays a role in spermatogenesis by enhancing the binding of CREM isoform tau to its coactivator FHL5 and increasing the FHL5-regulated transcriptional activation of CREM isoform tau. Involved in the acrosome reaction and in binding of sperm to the zona pellucida. Plays a role in regulation of the cell cycle by controlling progression through the G2/M phase, possibly by delaying the activation of CDK1 which is required for entry into mitosis. May play a role in fertility and microtubule formation through interaction with RANBP9. In Bos taurus (Bovine), this protein is Sperm-associated antigen 8 (SPAG8).